Here is a 1547-residue protein sequence, read N- to C-terminus: MASCATVCLPTCGTRLSGHSRSRSVWKLVSYITLLHFILKVFLVFLTSFHLLTQLSIKSGNLLSSLGVAARSQVQIKLRKKEQVEADLVEICFKETYLTRADMWQITTMLRESCVYHQKRIVFCDVIRCWVDSIFKNGRKVFSAYIGPNTNIVFRSESSRMIIIIQLSQETWHFEETGEIIFHRMVNSLLPDIFKQWEENEHHHTVTIVLFTSVSMDSHAVKLKRGEKAKDVQDFYRVVCDQVQLSQWEQIMVRLRFEFQNFAKEVLTESHAKSHTEIRGRILPSVKSNILGAITLAASLVHSPAIDRDLRRTNVEVIVVSPGSGVYEVEYDALYRASEKISSTEVGVDIICMSKAPLHVTPLFLYKPKKCSNQLEYCVPSWIDISYYGDSDFFTNQWVPRCKIYEIQMMGVMENELSAITIDYLNKPSGKKPLSEYCREYDASLFGPIAVELSVEDAASVVSKMRSDTFPKLPVKQLLSSKGSISSLHAPTAVTSKTPPPKASVKVADVRPSPAASKPRVSALTSLLAFGVRAEKSAPASPALSAVNTLSSIQSMDLRRDNDSVKRDTESIVTDDTVHNTKAEPRITEIAPIAPSLPFAPNLKPKKSTSTLSQSPTYNRIAATPDQEVERRSSLSQKVQMGLSGSPLDHRGKVAKAASANAKSINTETTPEKRNMMWRNIRTPSNISQDEMLDILTYSRWRTVYPQKTKRRSAKWKLLASPAALPLRTNIFPTVAELQTEYRFQVYDVSLDTDMENVLGIHGLFREMVSVRLCKGFQLAIGSRVRHVESQRSDGRPSAITTDIGKDALGAVVYLTTGDQVHRISCDYSGMMNVQIYHAIDKVDIEEPVFDIYARRTYSDKFKHFIFPPFDTSSKRLNWNLYDHSLAGYDTAGSAATQTRLNQLRVVLIPSFLSRSKNLGHDDSSEVYNAEEVRLDGLRRILGGIYRHSISRDEDKERAKIAPNLKFYTGELEDFLFQIVESNPAELAGGRDSLFMKRNQRFDKNIKLAQLATELQAPKGGIRFFDRRWHWKSYPHCFIGQDFVEWLIDNYSDIDTPDEAVAYGNELMKKDFFVHVEDRHAFLDGHYFYQLKSEYATEATDSKPAEEKSGWFNSKRSMASVSSEKSLGRFKGSRNQSVQSFGDFLSLSRVTSRSSNDQKEEEINPITVEISKSVRVDLDPSKKSYRPETVLIHHDRIHNPRKCFHLRFEWANTTPKFIEDYISGLTRTCERYGLKLVELPILEVSALLEHNPFASEITLDMPTLDQLSGLPPHVLEYYASDPHAIAREILHHFGFVIDTLSMSDWKLAEVQIRNSWGVPTYKYSQWVEKNGLLIAQVVGDQIIMIPNNLQLNRQSGAQSNAIQLQSEAQGIILEMQYLMCRSEKVRDMLGKVNLSPEASPGTMTPGEEGSKNGTPKLAIEAKMEGRVESPQVEWREDVEIAPEVEHKGGADGDENDEEGDEKSEEGDKGESENENAGMGMEQDGENENENENENENSKDNKANETTSEVKEVPAGVEIEHKEHVEEDKSDGPEPKKEDKGKEVEDDK.

2 disordered regions span residues 489-517 and 597-632; these read HAPT…PAAS and LPFA…VERR. Residues 608 to 618 show a composition bias toward polar residues; sequence STSTLSQSPTY. Positions 1018 to 1093 constitute a DEP domain; that stretch reads PKGGIRFFDR…DGHYFYQLKS (76 aa). Positions 1393-1547 are disordered; that stretch reads NLSPEASPGT…DKGKEVEDDK (155 aa). Residues 1419–1450 are compositionally biased toward basic and acidic residues; the sequence is IEAKMEGRVESPQVEWREDVEIAPEVEHKGGA. Acidic residues-rich tracts occupy residues 1451–1464 and 1482–1494; these read DGDE…EKSE and QDGE…ENEN. Basic and acidic residues predominate over residues 1495-1547; that stretch reads ENSKDNKANETTSEVKEVPAGVEIEHKEHVEEDKSDGPEPKKEDKGKEVEDDK.

This sequence belongs to the IML1 family.

It is found in the vacuole membrane. The sequence is that of Vacuolar membrane-associated protein IML1 (IML1) from Yarrowia lipolytica (strain CLIB 122 / E 150) (Yeast).